A 1182-amino-acid chain; its full sequence is Tyrosine-protein kinase ABL2 (1182 aa).

2 disordered regions span residues 1–47 (MGQQ…TGFN) and 60–80 (EDGF…HRPY). G2 is lipidated: N-myristoyl glycine. The interval 2–106 (GQQVGRVGEA…SKENLLGATE (105 aa)) is CAP. Low complexity predominate over residues 20 to 30 (RGIRGSSAARP). Residue S97 is modified to Phosphoserine. Residues 107 to 167 (SDPNLFVALY…PSNYITPVNS (61 aa)) form the SH3 domain. Residues Y116, Y161, Y174, Y185, Y218, and Y231 each carry the phosphotyrosine modification. The SH2 domain maps to 173–263 (WYHGPVSRSA…GLVTTLHYPA (91 aa)). Y261 carries the post-translational modification Phosphotyrosine; by ABL1 and autocatalysis. Y272 is modified (phosphotyrosine; by autocatalysis). The residue at position 275 (S275) is a Phosphoserine. In terms of domain architecture, Protein kinase spans 288-539 (ITMKHKLGGG…PSFAETHQAF (252 aa)). 294-302 (LGGGQYGEV) provides a ligand contact to ATP. Phosphotyrosine occurs at positions 299 and 303. Residues K317 and 362–368 (EYMPYGN) each bind ATP. D409 acts as the Proton acceptor in catalysis. The short motif at 427-451 (DFGLSRLMTGDTYTAHAGAKFPIKW) is the Kinase activation loop element. Y439 is modified (phosphotyrosine; by autocatalysis and SRC-type Tyr-kinases). Y459 carries the post-translational modification Phosphotyrosine. Position 568 is a phosphotyrosine; by autocatalysis (Y568). The segment at 611 to 641 (IRGAQASSGSPALPRKQRDKSPSSLLEDAKE) is disordered. Residues S620, S631, and S633 each carry the phosphoserine modification. A Phosphotyrosine modification is found at D647. Residues 654–674 (SSFMKKRNAPTPPKRSSSFRE) form a disordered region. Phosphoserine is present on S655. Residues 658–660 (KKR) carry the Nuclear localization signal motif. A662 and R668 each carry phosphotyrosine. 3 positions are modified to phosphoserine: S669, S670, and S671. Phosphotyrosine occurs at positions 683 and 718. Residue Y683 is modified to Phosphotyrosine; by autocatalysis. The interval 694 to 930 (SLQHADGFSF…PVLPTTHNHK (237 aa)) is F-actin-binding. The tract at residues 763 to 794 (LRAGKPTASDDTSKPFPRSNSTSSMSSGLPEQ) is disordered. K776 is modified (N6-acetyllysine). Residues 780–791 (RSNSTSSMSSGL) show a composition bias toward polar residues. The residue at position 783 (S783) is a Phosphoserine. The residue at position 800 (T800) is a Phosphothreonine. Over residues 807 to 823 (RSKLQLERTVSTSSQPE) the composition is skewed to polar residues. Residues 807-851 (RSKLQLERTVSTSSQPEENVDRANDMLPKKSEESAAPSRERPKAK) are disordered. Phosphoserine occurs at positions 817 and 820. Basic and acidic residues predominate over residues 825-849 (NVDRANDMLPKKSEESAAPSRERPK). 2 positions are modified to phosphoserine: S915 and S936. A disordered region spans residues 964 to 1024 (HQVTSSGDKD…TSETQEGGKK (61 aa)). A compositionally biased stretch (polar residues) spans 1010–1019 (TAGQSTSETQ). The F-actin-binding stretch occupies residues 1020-1182 (EGGKKAALGA…VQEISDVVQR (163 aa)).

This sequence belongs to the protein kinase superfamily. Tyr protein kinase family. ABL subfamily. In terms of assembly, interacts with PSMA7. Interacts with CTTN. Found in a complex with ABL1, ABL2, CRK and UNC119; leading to the inhibition of CRK phosphorylation by ABL kinases. Mg(2+) serves as cofactor. Mn(2+) is required as a cofactor. In terms of processing, phosphorylated at Tyr-261 by ABL1 in response to oxidative stress. Phosphorylated by PDGFRB. Polyubiquitinated. Polyubiquitination of ABL2 leads to degradation. As to expression, widely expressed.

It is found in the cytoplasm. The protein resides in the cytoskeleton. It catalyses the reaction L-tyrosyl-[protein] + ATP = O-phospho-L-tyrosyl-[protein] + ADP + H(+). Stabilized in the inactive form by an association between the SH3 domain and the SH2-TK linker region, interactions of the N-terminal cap, and contributions from an N-terminal myristoyl group and phospholipids. Activated by autophosphorylation as well as by SRC-family kinase-mediated phosphorylation. Activated by RIN1 binding to the SH2 and SH3 domains. Inhibited by imatinib mesylate (Gleevec) which is used for the treatment of chronic myeloid leukemia (CML). Phosphatidylinositol 4,5-bisphosphate (PIP2), a highly abundant phosphoinositide known to regulate cytoskeletal and membrane proteins, inhibits the tyrosine kinase activity. In terms of biological role, non-receptor tyrosine-protein kinase that plays an ABL1-overlapping role in key processes linked to cell growth and survival such as cytoskeleton remodeling in response to extracellular stimuli, cell motility and adhesion and receptor endocytosis. Coordinates actin remodeling through tyrosine phosphorylation of proteins controlling cytoskeleton dynamics like MYH10 (involved in movement); CTTN (involved in signaling); or TUBA1 and TUBB (microtubule subunits). Binds directly F-actin and regulates actin cytoskeletal structure through its F-actin-bundling activity. Involved in the regulation of cell adhesion and motility through phosphorylation of key regulators of these processes such as CRK, CRKL, DOK1 or ARHGAP35. Adhesion-dependent phosphorylation of ARHGAP35 promotes its association with RASA1, resulting in recruitment of ARHGAP35 to the cell periphery where it inhibits RHO. Phosphorylates multiple receptor tyrosine kinases like PDGFRB and other substrates which are involved in endocytosis regulation such as RIN1. In brain, may regulate neurotransmission by phosphorylating proteins at the synapse. ABL2 also acts as a regulator of multiple pathological signaling cascades during infection. Pathogens can highjack ABL2 kinase signaling to reorganize the host actin cytoskeleton for multiple purposes, like facilitating intracellular movement and host cell exit. Finally, functions as its own regulator through autocatalytic activity as well as through phosphorylation of its inhibitor, ABI1. Positively regulates chemokine-mediated T-cell migration, polarization, and homing to lymph nodes and immune-challenged tissues, potentially via activation of NEDD9/HEF1 and RAP1. The protein is Tyrosine-protein kinase ABL2 (ABL2) of Homo sapiens (Human).